The chain runs to 309 residues: Protein FdhE homolog (309 aa).

The protein belongs to the FdhE family.

Its subcellular location is the cytoplasm. In terms of biological role, necessary for formate dehydrogenase activity. This chain is Protein FdhE homolog, found in Cronobacter sakazakii (strain ATCC BAA-894) (Enterobacter sakazakii).